The sequence spans 272 residues: tRNA pseudouridine synthase B (272 aa).

Catalysis depends on Asp-38, which acts as the Nucleophile.

This sequence belongs to the pseudouridine synthase TruB family. Type 1 subfamily.

The catalysed reaction is uridine(55) in tRNA = pseudouridine(55) in tRNA. Responsible for synthesis of pseudouridine from uracil-55 in the psi GC loop of transfer RNAs. In Campylobacter jejuni subsp. jejuni serotype O:23/36 (strain 81-176), this protein is tRNA pseudouridine synthase B.